Consider the following 50-residue polypeptide: Large ribosomal subunit protein bL33B (50 aa).

Belongs to the bacterial ribosomal protein bL33 family.

The protein is Large ribosomal subunit protein bL33B of Streptococcus pneumoniae (strain ATCC BAA-255 / R6).